A 717-amino-acid chain; its full sequence is Cleavage stimulation factor subunit 3 (717 aa).

At S2 the chain carries N-acetylserine. HAT repeat units lie at residues 45–77, 79–110, 117–152, 163–196, 221–261, 271–303, 319–352, 354–387, and 458–494; these read QPID…AEIK, KNYD…YVRE, SYKE…FLKG, QRIT…YEEG, KEYE…WEKS, LITK…YLEQ, LFSD…YEES, MKYE…FARR, and NEDN…FESN. Residues 683–704 are disordered; the sequence is AVKRPNEDSDEDEEKGAVVPPV. Position 691 is a phosphoserine (S691).

In terms of assembly, homodimer. The CSTF complex is composed of CSTF1 (50 kDa subunit), CSTF2 (64 kDa subunit) and CSTF3 (77 kDa subunit). CSTF3 directly interacts with CSTF1 and CSTF2. Interacts with FIP1L1.

It is found in the nucleus. In terms of biological role, one of the multiple factors required for polyadenylation and 3'-end cleavage of mammalian pre-mRNAs. The polypeptide is Cleavage stimulation factor subunit 3 (Cstf3) (Mus musculus (Mouse)).